The primary structure comprises 556 residues: Formate--tetrahydrofolate ligase (556 aa).

Position 65-72 (65-72 (TPAGEGKT)) interacts with ATP.

Belongs to the formate--tetrahydrofolate ligase family.

The catalysed reaction is (6S)-5,6,7,8-tetrahydrofolate + formate + ATP = (6R)-10-formyltetrahydrofolate + ADP + phosphate. It participates in one-carbon metabolism; tetrahydrofolate interconversion. This Heliobacterium modesticaldum (strain ATCC 51547 / Ice1) protein is Formate--tetrahydrofolate ligase.